A 484-amino-acid polypeptide reads, in one-letter code: MTETKTLKNFIGGQWVASTSGKEEVVPNPATGEVLAKVPLSSREELDAAVAAAKEAFREWRKVPVPRRARILFRYQQLLVEHWDELARLVTLENGKVYEDAYGEVQRGIECVEFAAGIPTLMMGQQLPDIATDIESGMYRYPLGVVAGITPFNFPMMVPCWMFPLAIACGNTFVLKPSERTPMLANRLAELFTEAGLPPGVLNIVHGAHEVVGGILEHKDIKAVSFVGSQPVAEYVYKTAAAHGKRVQALAGAKNHSIVMPDADLDMAVTNIINAAFGSAGERCMACSVVVAVGDIADELVRRLKEAADRIQIGNGLDKGVFLGPVIRESHKERTIKYIEIGEKEGALLVRDGRRDSATSGQGYFIGPTIFDHVKPGMTIWTDEIFAPVLSVVRARDLDEAIEIANRSEFANGACIYTDSAKAIRQFREEIDAGMLGVNVAVPAPMAFFPFSGYKNSFYGDLHANGRDGVEFYTRKKMVTARYQ.

Residues F152, K176, E179, R180, and S229 each contribute to the NAD(+) site. Residue C284 is the Nucleophile of the active site. E384 lines the NAD(+) pocket.

This sequence belongs to the aldehyde dehydrogenase family. IolA subfamily. In terms of assembly, homotetramer.

The enzyme catalyses 3-oxopropanoate + NAD(+) + CoA + H2O = hydrogencarbonate + acetyl-CoA + NADH + H(+). It carries out the reaction 2-methyl-3-oxopropanoate + NAD(+) + CoA + H2O = propanoyl-CoA + hydrogencarbonate + NADH + H(+). It functions in the pathway polyol metabolism; myo-inositol degradation into acetyl-CoA; acetyl-CoA from myo-inositol: step 7/7. Its function is as follows. Catalyzes the oxidation of malonate semialdehyde (MSA) and methylmalonate semialdehyde (MMSA) into acetyl-CoA and propanoyl-CoA, respectively. Is involved in a myo-inositol catabolic pathway. Bicarbonate, and not CO2, is the end-product of the enzymatic reaction. This Geobacillus kaustophilus (strain HTA426) protein is Malonate-semialdehyde dehydrogenase 3.